We begin with the raw amino-acid sequence, 452 residues long: UDP-N-acetylmuramate--L-alanine ligase (452 aa).

Residue 121-127 participates in ATP binding; sequence GTHGKTT.

Belongs to the MurCDEF family.

It is found in the cytoplasm. The enzyme catalyses UDP-N-acetyl-alpha-D-muramate + L-alanine + ATP = UDP-N-acetyl-alpha-D-muramoyl-L-alanine + ADP + phosphate + H(+). It functions in the pathway cell wall biogenesis; peptidoglycan biosynthesis. Functionally, cell wall formation. This chain is UDP-N-acetylmuramate--L-alanine ligase, found in Christiangramia forsetii (strain DSM 17595 / CGMCC 1.15422 / KT0803) (Gramella forsetii).